The primary structure comprises 222 residues: Large ribosomal subunit protein uL1 (222 aa).

This sequence belongs to the universal ribosomal protein uL1 family. Part of the 50S ribosomal subunit.

Binds directly to 23S rRNA. Probably involved in E site tRNA release. In terms of biological role, protein L1 is also a translational repressor protein, it controls the translation of its operon by binding to its mRNA. The protein is Large ribosomal subunit protein uL1 of Pyrobaculum neutrophilum (strain DSM 2338 / JCM 9278 / NBRC 100436 / V24Sta) (Thermoproteus neutrophilus).